The sequence spans 356 residues: Chaperone protein DnaJ (356 aa).

Residues D5–L69 enclose the J domain. The CR-type zinc finger occupies G121–H197. Zn(2+) contacts are provided by C134, C137, C151, C154, C171, C174, C185, and C188. CXXCXGXG motif repeat units follow at residues C134 to G141, C151 to G158, C171 to G178, and C185 to G192.

This sequence belongs to the DnaJ family. In terms of assembly, homodimer. The cofactor is Zn(2+).

Its subcellular location is the cytoplasm. Participates actively in the response to hyperosmotic and heat shock by preventing the aggregation of stress-denatured proteins and by disaggregating proteins, also in an autonomous, DnaK-independent fashion. Unfolded proteins bind initially to DnaJ; upon interaction with the DnaJ-bound protein, DnaK hydrolyzes its bound ATP, resulting in the formation of a stable complex. GrpE releases ADP from DnaK; ATP binding to DnaK triggers the release of the substrate protein, thus completing the reaction cycle. Several rounds of ATP-dependent interactions between DnaJ, DnaK and GrpE are required for fully efficient folding. Also involved, together with DnaK and GrpE, in the DNA replication of plasmids through activation of initiation proteins. This chain is Chaperone protein DnaJ, found in Hydrogenobacter thermophilus (strain DSM 6534 / IAM 12695 / TK-6).